The sequence spans 502 residues: Aspartyl/glutamyl-tRNA(Asn/Gln) amidotransferase subunit B (502 aa).

This sequence belongs to the GatB/GatE family. GatB subfamily. Heterotrimer of A, B and C subunits.

The enzyme catalyses L-glutamyl-tRNA(Gln) + L-glutamine + ATP + H2O = L-glutaminyl-tRNA(Gln) + L-glutamate + ADP + phosphate + H(+). It catalyses the reaction L-aspartyl-tRNA(Asn) + L-glutamine + ATP + H2O = L-asparaginyl-tRNA(Asn) + L-glutamate + ADP + phosphate + 2 H(+). Allows the formation of correctly charged Asn-tRNA(Asn) or Gln-tRNA(Gln) through the transamidation of misacylated Asp-tRNA(Asn) or Glu-tRNA(Gln) in organisms which lack either or both of asparaginyl-tRNA or glutaminyl-tRNA synthetases. The reaction takes place in the presence of glutamine and ATP through an activated phospho-Asp-tRNA(Asn) or phospho-Glu-tRNA(Gln). In Arthrobacter sp. (strain FB24), this protein is Aspartyl/glutamyl-tRNA(Asn/Gln) amidotransferase subunit B.